The following is a 244-amino-acid chain: Aspartate/glutamate leucyltransferase (244 aa).

This sequence belongs to the R-transferase family. Bpt subfamily.

The protein resides in the cytoplasm. The enzyme catalyses N-terminal L-glutamyl-[protein] + L-leucyl-tRNA(Leu) = N-terminal L-leucyl-L-glutamyl-[protein] + tRNA(Leu) + H(+). It carries out the reaction N-terminal L-aspartyl-[protein] + L-leucyl-tRNA(Leu) = N-terminal L-leucyl-L-aspartyl-[protein] + tRNA(Leu) + H(+). In terms of biological role, functions in the N-end rule pathway of protein degradation where it conjugates Leu from its aminoacyl-tRNA to the N-termini of proteins containing an N-terminal aspartate or glutamate. This is Aspartate/glutamate leucyltransferase from Bordetella bronchiseptica (strain ATCC BAA-588 / NCTC 13252 / RB50) (Alcaligenes bronchisepticus).